The chain runs to 139 residues: Nucleoside diphosphate kinase (139 aa).

6 residues coordinate ATP: Lys-11, Phe-59, Arg-87, Thr-93, Arg-104, and Asn-114. Residue His-117 is the Pros-phosphohistidine intermediate of the active site.

It belongs to the NDK family. As to quaternary structure, homotetramer. It depends on Mg(2+) as a cofactor.

The protein localises to the cytoplasm. The enzyme catalyses a 2'-deoxyribonucleoside 5'-diphosphate + ATP = a 2'-deoxyribonucleoside 5'-triphosphate + ADP. It catalyses the reaction a ribonucleoside 5'-diphosphate + ATP = a ribonucleoside 5'-triphosphate + ADP. Major role in the synthesis of nucleoside triphosphates other than ATP. The ATP gamma phosphate is transferred to the NDP beta phosphate via a ping-pong mechanism, using a phosphorylated active-site intermediate. The polypeptide is Nucleoside diphosphate kinase (Flavobacterium psychrophilum (strain ATCC 49511 / DSM 21280 / CIP 103535 / JIP02/86)).